Reading from the N-terminus, the 263-residue chain is MLHPVWGCVVAVMGVLWFYSSGVQSQCWEHSQCRDLASEANILECIQACKVDLSAESPLFPGNGHLQPTSEDIQNYVMSHFHWNTFGQRMNGTPGGSKREGASTALSVLLEALSQPRDEVERESEEEEGLQQHRRDDKRSYSMEHFRWGKPVGRKRRPVKVYPNGVEEESAESYPAEIRRDLSLKLDYPQGEELEEVFGGENDLLNLQKKDGSYKMNHFRWSGPPKDKRYGGFMKSWDERSQKPLLTLFKNVMIKDGHEKKGQ.

An N-terminal signal peptide occupies residues methionine 1–serine 25. Glutamine 26 bears the Pyrrolidone carboxylic acid mark. 2 disulfide bridges follow: cysteine 27–cysteine 49 and cysteine 33–cysteine 45. The disordered stretch occupies residues serine 114–serine 142. Residues leucine 130–serine 142 are compositionally biased toward basic and acidic residues. Residue valine 152 is modified to Valine amide.

The protein belongs to the POMC family. Specific enzymatic cleavages at paired basic residues yield the different active peptides.

The protein resides in the secreted. In terms of biological role, stimulates the adrenal glands to release cortisol. Its function is as follows. Anorexigenic peptide. Increases the pigmentation of skin by increasing melanin production in melanocytes. Functionally, increases the pigmentation of skin by increasing melanin production in melanocytes. Endogenous orexigenic opiate. In terms of biological role, endogenous opiate. This chain is Pro-opiomelanocortin (pomc), found in Acipenser transmontanus (White sturgeon).